The following is a 462-amino-acid chain: tRNA modification GTPase MnmE (462 aa).

Residues Arg22, Glu87, and Arg126 each contribute to the (6S)-5-formyl-5,6,7,8-tetrahydrofolate site. Positions 220-382 (GLKVAIVGRP…LARKVQEIVL (163 aa)) constitute a TrmE-type G domain. Asn230 lines the K(+) pocket. GTP is bound by residues 230–235 (NVGKSS), 249–255 (SNIPGTT), and 274–277 (DTAG). Ser234 is a Mg(2+) binding site. K(+) contacts are provided by Ser249, Ile251, and Thr254. Thr255 contacts Mg(2+). Lys462 is a (6S)-5-formyl-5,6,7,8-tetrahydrofolate binding site.

It belongs to the TRAFAC class TrmE-Era-EngA-EngB-Septin-like GTPase superfamily. TrmE GTPase family. In terms of assembly, homodimer. Heterotetramer of two MnmE and two MnmG subunits. The cofactor is K(+).

Its subcellular location is the cytoplasm. Functionally, exhibits a very high intrinsic GTPase hydrolysis rate. Involved in the addition of a carboxymethylaminomethyl (cmnm) group at the wobble position (U34) of certain tRNAs, forming tRNA-cmnm(5)s(2)U34. This chain is tRNA modification GTPase MnmE, found in Moorella thermoacetica (strain ATCC 39073 / JCM 9320).